The primary structure comprises 262 residues: Indole-3-glycerol phosphate synthase (262 aa).

This sequence belongs to the TrpC family.

The enzyme catalyses 1-(2-carboxyphenylamino)-1-deoxy-D-ribulose 5-phosphate + H(+) = (1S,2R)-1-C-(indol-3-yl)glycerol 3-phosphate + CO2 + H2O. The protein operates within amino-acid biosynthesis; L-tryptophan biosynthesis; L-tryptophan from chorismate: step 4/5. This chain is Indole-3-glycerol phosphate synthase, found in Leptothrix cholodnii (strain ATCC 51168 / LMG 8142 / SP-6) (Leptothrix discophora (strain SP-6)).